Consider the following 423-residue polypeptide: Alpha-1-antichymotrypsin (423 aa).

Residues 1 to 23 (MERMLPLLALGLLAAGFCPAVLC) form the signal peptide. 5 N-linked (GlcNAc...) asparagine glycosylation sites follow: Asn33, Asn93, Asn106, Asn127, and Asn186. Residues 235-237 (KKK) mediate DNA binding. Asn271 carries N-linked (GlcNAc...) asparagine glycosylation. An RCL region spans residues 369–394 (GTEASAATAVKITLLSALVETRTIVR). Residues 381-389 (TLLSALVET) form an O-glycosylated at one site region.

Belongs to the serpin family. In terms of assembly, interacts with DNAJC1. Post-translationally, N- and O-glycosylated. Plasma. Synthesized in the liver. Like the related alpha-1-antitrypsin, its concentration increases in the acute phase of inflammation or infection. Found in the amyloid plaques from the hippocampus of Alzheimer disease brains.

The protein resides in the secreted. Although its physiological function is unclear, it can inhibit neutrophil cathepsin G and mast cell chymase, both of which can convert angiotensin-1 to the active angiotensin-2. The protein is Alpha-1-antichymotrypsin (SERPINA3) of Homo sapiens (Human).